Here is a 132-residue protein sequence, read N- to C-terminus: Agouti-signaling protein (132 aa).

A signal peptide spans 1–22 (MDVTRLLLATLLVFLCFFAAYS). N-linked (GlcNAc...) asparagine glycosylation is present at Asn-39. The tract at residues 61–93 (KISRKEAEKKRSSKKEASKQKVARPRTPLSVPC) is disordered. The span at 64–79 (RKEAEKKRSSKKEASK) shows a compositional bias: basic and acidic residues. 5 cysteine pairs are disulfide-bonded: Cys-93-Cys-108, Cys-100-Cys-114, Cys-107-Cys-125, Cys-111-Cys-132, and Cys-116-Cys-123. One can recognise an Agouti domain in the interval 93 to 132 (CVSTRGSCKPPAPACCHPCASCQCRFFRSACSCRVLNVNC).

It localises to the secreted. In terms of biological role, involved in the regulation of melanogenesis. The binding of ASP to MC1R precludes alpha-MSH initiated signaling and thus blocks production of cAMP, leading to a down-regulation of eumelanogenesis (brown/black pigment) and thus increasing synthesis of pheomelanin (yellow/red pigment). The sequence is that of Agouti-signaling protein (ASIP) from Callithrix geoffroyi (Geoffroy's marmoset).